A 545-amino-acid chain; its full sequence is Alpha-galactosidase A (545 aa).

A signal peptide spans methionine 1–glycine 31. Cysteine 54 and cysteine 86 are oxidised to a cystine. 4 N-linked (GlcNAc...) asparagine glycosylation sites follow: asparagine 57, asparagine 95, asparagine 101, and asparagine 131. The cysteines at positions 134 and 164 are disulfide-linked. The active-site Nucleophile is the aspartate 162. Asparagine 211 is a glycosylation site (N-linked (GlcNAc...) asparagine). The Proton donor role is filled by aspartate 220. 2 N-linked (GlcNAc...) asparagine glycosylation sites follow: asparagine 363 and asparagine 444. Residues cysteine 421–threonine 518 form the Ricin B-type lectin domain. Intrachain disulfides connect cysteine 438–cysteine 452 and cysteine 477–cysteine 490.

The protein belongs to the glycosyl hydrolase 27 family. In terms of processing, a C-terminal Ser/Thr-rich region may provide possible sites for O-glycosylation.

The protein resides in the secreted. It catalyses the reaction Hydrolysis of terminal, non-reducing alpha-D-galactose residues in alpha-D-galactosides, including galactose oligosaccharides, galactomannans and galactolipids.. Hydrolyzes a variety of simple alpha-D-galactoside as well as more complex molecules such as oligosaccharides and polysaccharides. The chain is Alpha-galactosidase A (aglA) from Aspergillus niger.